The chain runs to 68 residues: uncharacterized protein (68 aa).

This is an uncharacterized protein from Escherichia coli (Bacteriophage T4).